Here is a 328-residue protein sequence, read N- to C-terminus: Malate dehydrogenase (328 aa).

16–22 (GAAGQIS) lines the NAD(+) pocket. Residues Arg97 and Arg103 each contribute to the substrate site. Residues Asn110, Gln117, and 134–136 (VGN) each bind NAD(+). 2 residues coordinate substrate: Asn136 and Arg167. His192 functions as the Proton acceptor in the catalytic mechanism.

The protein belongs to the LDH/MDH superfamily. MDH type 2 family.

It catalyses the reaction (S)-malate + NAD(+) = oxaloacetate + NADH + H(+). Catalyzes the reversible oxidation of malate to oxaloacetate. In Corynebacterium glutamicum (strain R), this protein is Malate dehydrogenase.